Reading from the N-terminus, the 351-residue chain is Chorismate synthase (351 aa).

A disordered region spans residues 39 to 60 (EDIQRDLERRRPGKRLTSPRGE). 2 residues coordinate NADP(+): Arg-48 and Arg-53. Residues 124 to 126 (RSS), Ala-276, 291 to 295 (KPIPS), and Arg-317 contribute to the FMN site.

The protein belongs to the chorismate synthase family. Homotetramer. The cofactor is FMNH2.

It catalyses the reaction 5-O-(1-carboxyvinyl)-3-phosphoshikimate = chorismate + phosphate. It functions in the pathway metabolic intermediate biosynthesis; chorismate biosynthesis; chorismate from D-erythrose 4-phosphate and phosphoenolpyruvate: step 7/7. Functionally, catalyzes the anti-1,4-elimination of the C-3 phosphate and the C-6 proR hydrogen from 5-enolpyruvylshikimate-3-phosphate (EPSP) to yield chorismate, which is the branch point compound that serves as the starting substrate for the three terminal pathways of aromatic amino acid biosynthesis. This reaction introduces a second double bond into the aromatic ring system. The polypeptide is Chorismate synthase (Syntrophobacter fumaroxidans (strain DSM 10017 / MPOB)).